The sequence spans 368 residues: Probable magnesium transporter NIPA3 (368 aa).

At 1–18 (MASLSGSWRDAYKGMSSD) the chain is on the extracellular side. A helical transmembrane segment spans residues 19–39 (NIKGLVLALSSSLFIGASFIV). The Cytoplasmic portion of the chain corresponds to 40 to 66 (KKKGLKRAGASGLRAGSGGYSYLLEPL). The chain crosses the membrane as a helical span at residues 67–87 (WWVGMITMIVGEIANFAAYAF). Over 88 to 90 (APA) the chain is Extracellular. A helical transmembrane segment spans residues 91-111 (ILVTPLGALSIIISAALAHVI). Over 112-115 (LHEK) the chain is Cytoplasmic. The helical transmembrane segment at 116–136 (LHTFGLLGCVLCVVGSITIVL) threads the bilayer. Topologically, residues 137-157 (HAPQEQEIDSVLQVWNLATEP) are extracellular. The chain crosses the membrane as a helical span at residues 158–178 (AFLLYAAAVVGAAIILIVQFV). The Cytoplasmic portion of the chain corresponds to 179 to 189 (PQYGQSHVMVY). Residues 190 to 210 (IGVCSLVGSLSVMSVKALGIA) traverse the membrane as a helical segment. Over 211-220 (LKLTFSGMNQ) the chain is Extracellular. A helical transmembrane segment spans residues 221 to 241 (LIYPQTWVFTLIVLTCVITQM). Over 242-255 (NYLNKALDTFNTAV) the chain is Cytoplasmic. Residues 256-276 (VSPIYYVMFTSLTILASVIMF) form a helical membrane-spanning segment. The Extracellular portion of the chain corresponds to 277–283 (KDWDRQD). The chain crosses the membrane as a helical span at residues 284-304 (GTQIVTELCGFVTILSGTFLL). The Cytoplasmic segment spans residues 305–368 (HKTKDMVDGS…ILPQDGPEAV (64 aa)).

Belongs to the NIPA (TC 2.A.7) family. As to quaternary structure, homodimer.

It localises to the cell membrane. The protein resides in the early endosome. Acts as a Mg(2+) transporter. Can also transport other divalent cations such as Fe(2+), Sr(2+), Ba(2+), Mn(2+) and Co(2+) but to a much less extent than Mg(2+). This Arabidopsis thaliana (Mouse-ear cress) protein is Probable magnesium transporter NIPA3.